The primary structure comprises 148 residues: Cysteine-rich venom protein VAR6 (148 aa).

A signal peptide spans 1 to 22 (MILLKLYLTLAAILCQSRGTTS). An SCP domain is found at 41 to 140 (NKHNDLRRTV…AGVMVGHYTQ (100 aa)).

It belongs to the CRISP family. In terms of processing, contains 8 disulfide bonds. Expressed by the venom gland.

The protein resides in the secreted. Its function is as follows. Blocks ryanodine receptors, and potassium channels. The protein is Cysteine-rich venom protein VAR6 of Varanus acanthurus (Ridge-tailed monitor).